The sequence spans 347 residues: Anthranilate phosphoribosyltransferase (347 aa).

5-phospho-alpha-D-ribose 1-diphosphate is bound by residues Gly88, 91–92, Thr96, 98–101, 116–124, and Ser128; these read GD, NIST, and KHGNRSVSS. Gly88 contributes to the anthranilate binding site. Ser100 contributes to the Mg(2+) binding site. Asn119 lines the anthranilate pocket. Arg174 provides a ligand contact to anthranilate. Mg(2+) is bound by residues Asp232 and Glu233.

Belongs to the anthranilate phosphoribosyltransferase family. In terms of assembly, homodimer. Requires Mg(2+) as cofactor.

It catalyses the reaction N-(5-phospho-beta-D-ribosyl)anthranilate + diphosphate = 5-phospho-alpha-D-ribose 1-diphosphate + anthranilate. Its pathway is amino-acid biosynthesis; L-tryptophan biosynthesis; L-tryptophan from chorismate: step 2/5. Catalyzes the transfer of the phosphoribosyl group of 5-phosphorylribose-1-pyrophosphate (PRPP) to anthranilate to yield N-(5'-phosphoribosyl)-anthranilate (PRA). This chain is Anthranilate phosphoribosyltransferase, found in Shewanella oneidensis (strain ATCC 700550 / JCM 31522 / CIP 106686 / LMG 19005 / NCIMB 14063 / MR-1).